The primary structure comprises 490 residues: DNA-binding protein D-ETS-3 (490 aa).

Disordered stretches follow at residues 190-255 (TASS…SGGG) and 271-294 (SSTQ…SQLR). The span at 196–207 (HVEHKVRADKST) shows a compositional bias: basic and acidic residues. The span at 211 to 227 (ATTSSHAAAPSSSSSAS) shows a compositional bias: low complexity. Positions 244-255 (GTGGGASASGGG) are enriched in gly residues. A compositionally biased stretch (low complexity) spans 271–280 (SSTQSQGYSS). The ETS DNA-binding region spans 317–397 (IQLWQFLLEL…HGKRYAYKFD (81 aa)).

The protein belongs to the ETS family. As to expression, embryonic ventral nervous system, higher in the thoracic than abdominal segments.

The protein localises to the nucleus. In Drosophila melanogaster (Fruit fly), this protein is DNA-binding protein D-ETS-3 (Ets65A).